Here is a 103-residue protein sequence, read N- to C-terminus: Large ribosomal subunit protein bL21 (103 aa).

Belongs to the bacterial ribosomal protein bL21 family. Part of the 50S ribosomal subunit. Contacts protein L20.

Its function is as follows. This protein binds to 23S rRNA in the presence of protein L20. The polypeptide is Large ribosomal subunit protein bL21 (Alkaliphilus oremlandii (strain OhILAs) (Clostridium oremlandii (strain OhILAs))).